A 287-amino-acid chain; its full sequence is ATP synthase gamma chain (287 aa).

It belongs to the ATPase gamma chain family. F-type ATPases have 2 components, CF(1) - the catalytic core - and CF(0) - the membrane proton channel. CF(1) has five subunits: alpha(3), beta(3), gamma(1), delta(1), epsilon(1). CF(0) has three main subunits: a, b and c.

It is found in the cell inner membrane. Functionally, produces ATP from ADP in the presence of a proton gradient across the membrane. The gamma chain is believed to be important in regulating ATPase activity and the flow of protons through the CF(0) complex. The protein is ATP synthase gamma chain of Cronobacter sakazakii (strain ATCC BAA-894) (Enterobacter sakazakii).